Consider the following 136-residue polypeptide: Inner membrane protein YbhQ (136 aa).

Topologically, residues 1–12 (MKWQQRVRVATG) are cytoplasmic. The helical transmembrane segment at 13–33 (LSCWQIMLHLLVVALLVVGWM) threads the bilayer. The Periplasmic portion of the chain corresponds to 34–37 (SKTL). Residues 38-58 (VHVGVGLCALYCVTVVMMLVF) form a helical membrane-spanning segment. At 59-71 (QRHPEQRWREVAD) the chain is on the cytoplasmic side. The helical transmembrane segment at 72–92 (VLEELTTTWYFGAALIVLWLL) threads the bilayer. Over 93–99 (SRVLENN) the chain is Periplasmic. A helical transmembrane segment spans residues 100–120 (FLLAIAGLAILAGPAVVSLLA). The Cytoplasmic segment spans residues 121-136 (KDKKLHHLTSKHRVRR).

It localises to the cell inner membrane. The polypeptide is Inner membrane protein YbhQ (ybhQ) (Escherichia coli O157:H7).